Here is a 209-residue protein sequence, read N- to C-terminus: Probable glutathione peroxidase 8-A (209 aa).

Residues 18 to 40 (VSVVFLSMLLCTGILCVLQLGFL) form a helical membrane-spanning segment. Cys79 is a catalytic residue.

This sequence belongs to the glutathione peroxidase family.

It localises to the membrane. It carries out the reaction 2 glutathione + H2O2 = glutathione disulfide + 2 H2O. This Xenopus laevis (African clawed frog) protein is Probable glutathione peroxidase 8-A (gpx8-a).